The following is a 159-amino-acid chain: Siroheme decarboxylase beta subunit (159 aa).

Residue 152 to 157 participates in substrate binding; that stretch reads KTSMTY.

Belongs to the Ahb/Nir family. In terms of assembly, forms a heterodimer composed of AhbA and AhbB.

The catalysed reaction is siroheme + 2 H(+) = 12,18-didecarboxysiroheme + 2 CO2. It participates in porphyrin-containing compound metabolism; protoheme biosynthesis. In terms of biological role, involved in siroheme-dependent heme b biosynthesis. Catalyzes the decarboxylation of siroheme into didecarboxysiroheme. Siroheme is decarboxylated to monodecarboxysiroheme, which is in turn decarboxylated to didecarboxysiroheme. The chain is Siroheme decarboxylase beta subunit from Desulfovibrio desulfuricans (strain ATCC 27774 / DSM 6949 / MB).